Here is a 491-residue protein sequence, read N- to C-terminus: UDP-N-acetylmuramate--L-alanine ligase (491 aa).

Position 126–132 (126–132 (GTHGKTT)) interacts with ATP.

The protein belongs to the MurCDEF family.

The protein resides in the cytoplasm. It catalyses the reaction UDP-N-acetyl-alpha-D-muramate + L-alanine + ATP = UDP-N-acetyl-alpha-D-muramoyl-L-alanine + ADP + phosphate + H(+). It participates in cell wall biogenesis; peptidoglycan biosynthesis. Its function is as follows. Cell wall formation. This Escherichia coli (strain K12 / MC4100 / BW2952) protein is UDP-N-acetylmuramate--L-alanine ligase.